Consider the following 209-residue polypeptide: Guanylyl cyclase-activating protein 3 (209 aa).

The N-myristoyl glycine moiety is linked to residue glycine 2. Asparagine 3 carries the post-translational modification Deamidated asparagine. 4 consecutive EF-hand domains span residues 15 to 50, 52 to 87, 88 to 123, and 130 to 165; these read PTQE…QGLN, KANK…IMQE, KMEQ…VQAL, and SPEE…DQDL. Residues aspartate 65, asparagine 67, aspartate 69, glutamate 76, aspartate 101, aspartate 103, asparagine 105, serine 107, glutamate 112, aspartate 143, asparagine 145, aspartate 147, glutamate 149, and glutamate 154 each coordinate Ca(2+). Residues 187 to 209 form a disordered region; it reads QPDMETDSSKSPDKAGLGKVKMK.

In terms of tissue distribution, retina.

In terms of biological role, stimulates guanylyl cyclase 1 (GC1) and GC2 when free calcium ions concentration is low and inhibits guanylyl cyclases when free calcium ions concentration is elevated. This Ca(2+)-sensitive regulation of guanylyl cyclase (GC) is a key event in recovery of the dark state of rod photoreceptors following light exposure. The sequence is that of Guanylyl cyclase-activating protein 3 (GUCA1C) from Homo sapiens (Human).